The primary structure comprises 149 residues: Probable flagellum biosynthesis repressor protein FlbT (149 aa).

Belongs to the FlbT family.

Functionally, has a post-transcriptional repressor function in flagellum biogenesis. Associates with the 5'-UTR of fljK mRNA and promotes its degradation. The polypeptide is Probable flagellum biosynthesis repressor protein FlbT (Sinorhizobium medicae (strain WSM419) (Ensifer medicae)).